Reading from the N-terminus, the 64-residue chain is Large ribosomal subunit protein bL35 (64 aa).

This sequence belongs to the bacterial ribosomal protein bL35 family.

This Colwellia psychrerythraea (strain 34H / ATCC BAA-681) (Vibrio psychroerythus) protein is Large ribosomal subunit protein bL35.